A 494-amino-acid chain; its full sequence is Flap endonuclease 1 (494 aa).

The N-domain stretch occupies residues 1–106 (MGIKGLIPFL…KTLEKRRQQR (106 aa)). Aspartate 34 contributes to the Mg(2+) binding site. Residues arginine 47 and arginine 72 each coordinate DNA. Residues aspartate 88, glutamate 160, glutamate 162, aspartate 181, and aspartate 183 each coordinate Mg(2+). The I-domain stretch occupies residues 124 to 253 (SVKKLVGRTV…KTAYSLVKKY (130 aa)). Glutamate 160 contacts DNA. DNA is bound by residues glycine 231 and aspartate 233. Residue aspartate 233 coordinates Mg(2+). The tract at residues 330–338 (IQTSLLSFL) is interaction with PCNA. 2 disordered regions span residues 341 to 382 (PQHN…ESST) and 395 to 426 (LFCE…ENET). A compositionally biased stretch (basic and acidic residues) spans 408 to 426 (DRGRVDKNEDLFKKSENET).

It belongs to the XPG/RAD2 endonuclease family. FEN1 subfamily. In terms of assembly, interacts with PCNA. Three molecules of FEN1 bind to one PCNA trimer with each molecule binding to one PCNA monomer. PCNA stimulates the nuclease activity without altering cleavage specificity. Mg(2+) is required as a cofactor. Phosphorylated. Phosphorylation upon DNA damage induces relocalization to the nuclear plasma.

The protein localises to the nucleus. It is found in the nucleolus. The protein resides in the nucleoplasm. It localises to the mitochondrion. In terms of biological role, structure-specific nuclease with 5'-flap endonuclease and 5'-3' exonuclease activities involved in DNA replication and repair. During DNA replication, cleaves the 5'-overhanging flap structure that is generated by displacement synthesis when DNA polymerase encounters the 5'-end of a downstream Okazaki fragment. It enters the flap from the 5'-end and then tracks to cleave the flap base, leaving a nick for ligation. Also involved in the long patch base excision repair (LP-BER) pathway, by cleaving within the apurinic/apyrimidinic (AP) site-terminated flap. Acts as a genome stabilization factor that prevents flaps from equilibrating into structures that lead to duplications and deletions. Also possesses 5'-3' exonuclease activity on nicked or gapped double-stranded DNA, and exhibits RNase H activity. Also involved in replication and repair of rDNA and in repairing mitochondrial DNA. In Theileria parva (East coast fever infection agent), this protein is Flap endonuclease 1.